Reading from the N-terminus, the 196-residue chain is Putative 3-methyladenine DNA glycosylase (196 aa).

The protein belongs to the DNA glycosylase MPG family.

This Chlorobium luteolum (strain DSM 273 / BCRC 81028 / 2530) (Pelodictyon luteolum) protein is Putative 3-methyladenine DNA glycosylase.